The chain runs to 559 residues: Dihydroxy-acid dehydratase (559 aa).

Cys-56 contacts [2Fe-2S] cluster. Asp-88 contributes to the Mg(2+) binding site. Cys-129 is a binding site for [2Fe-2S] cluster. Mg(2+) contacts are provided by Asp-130 and Lys-131. At Lys-131 the chain carries N6-carboxylysine. Cys-198 lines the [2Fe-2S] cluster pocket. A Mg(2+)-binding site is contributed by Glu-449. The active-site Proton acceptor is Ser-475.

Belongs to the IlvD/Edd family. In terms of assembly, homodimer. Requires [2Fe-2S] cluster as cofactor. It depends on Mg(2+) as a cofactor.

The enzyme catalyses (2R)-2,3-dihydroxy-3-methylbutanoate = 3-methyl-2-oxobutanoate + H2O. The catalysed reaction is (2R,3R)-2,3-dihydroxy-3-methylpentanoate = (S)-3-methyl-2-oxopentanoate + H2O. Its pathway is amino-acid biosynthesis; L-isoleucine biosynthesis; L-isoleucine from 2-oxobutanoate: step 3/4. It functions in the pathway amino-acid biosynthesis; L-valine biosynthesis; L-valine from pyruvate: step 3/4. Its function is as follows. Functions in the biosynthesis of branched-chain amino acids. Catalyzes the dehydration of (2R,3R)-2,3-dihydroxy-3-methylpentanoate (2,3-dihydroxy-3-methylvalerate) into 2-oxo-3-methylpentanoate (2-oxo-3-methylvalerate) and of (2R)-2,3-dihydroxy-3-methylbutanoate (2,3-dihydroxyisovalerate) into 2-oxo-3-methylbutanoate (2-oxoisovalerate), the penultimate precursor to L-isoleucine and L-valine, respectively. This Ruthia magnifica subsp. Calyptogena magnifica protein is Dihydroxy-acid dehydratase.